Reading from the N-terminus, the 131-residue chain is Profilin-3 (131 aa).

C13 and C115 are oxidised to a cystine. An Involved in PIP2 interaction motif is present at residues 81–97; sequence AVIRGKKGAGGITIKKT. T111 carries the phosphothreonine modification.

This sequence belongs to the profilin family. In terms of assembly, occurs in many kinds of cells as a complex with monomeric actin in a 1:1 ratio. Post-translationally, phosphorylated by MAP kinases.

Its subcellular location is the cytoplasm. The protein localises to the cytoskeleton. Its function is as follows. Binds to actin and affects the structure of the cytoskeleton. At high concentrations, profilin prevents the polymerization of actin, whereas it enhances it at low concentrations. By binding to PIP2, it inhibits the formation of IP3 and DG. The protein is Profilin-3 (PRO3) of Phleum pratense (Common timothy).